The following is a 54-amino-acid chain: Potassium channel toxin alpha-KTx 14.x (54 aa).

The N-terminal stretch at 1 to 23 (MKIFFAILLILAVCSMAIWTVNG) is a signal peptide. Cystine bridges form between Cys30-Cys46, Cys36-Cys51, and Cys40-Cys53.

This sequence belongs to the short scorpion toxin superfamily. Potassium channel inhibitor family. Alpha-KTx 14 subfamily. In terms of tissue distribution, expressed by the venom gland.

The protein resides in the secreted. Functionally, potassium channels inhibitor. The sequence is that of Potassium channel toxin alpha-KTx 14.x from Olivierus martensii (Manchurian scorpion).